The sequence spans 128 residues: Sm-like protein LSM1B (128 aa).

In terms of domain architecture, Sm spans 10–85 (YLSTSLASYL…VVLIGELDTE (76 aa)).

It belongs to the snRNP Sm proteins family. Component of the heptameric LSM1-LSM7 complex that forms a seven-membered ring structure with a donut shape. The LSM subunits are arranged in the order LSM1, LSM2, LSM3, LSM6, LSM5, LSM7 and LSM4. LSM1B subunit interacts only with its two neighboring subunits, LSM2 and LSM4. Expressed in roots, leaves, stems, flowers and siliques.

It is found in the cytoplasm. Its subcellular location is the P-body. Component of the cytoplasmic LSM1-LSM7 complex which is involved in mRNA degradation by promoting decapping and leading to accurate 5'-3' mRNA decay. LSM1A and LSM1B are essential for the formation of the cytoplasmic LSM1-LSM7 complex which regulates developmental gene expression by the decapping of specific development-related transcripts. Required for P-body formation during heat stress. This Arabidopsis thaliana (Mouse-ear cress) protein is Sm-like protein LSM1B.